The sequence spans 445 residues: Phosphoglucosamine mutase (445 aa).

The active-site Phosphoserine intermediate is the S102. Mg(2+) is bound by residues S102, D241, D243, and D245. Residue S102 is modified to Phosphoserine.

This sequence belongs to the phosphohexose mutase family. Requires Mg(2+) as cofactor. Post-translationally, activated by phosphorylation.

It carries out the reaction alpha-D-glucosamine 1-phosphate = D-glucosamine 6-phosphate. In terms of biological role, catalyzes the conversion of glucosamine-6-phosphate to glucosamine-1-phosphate. The protein is Phosphoglucosamine mutase of Pectobacterium carotovorum subsp. carotovorum (strain PC1).